We begin with the raw amino-acid sequence, 471 residues long: MSGYQNGGPRGLADDSDVEEEALVADYREQVQYEEGMDDPDMGLAQQTDDIQSRLVAAAQPLDFSAPLEVKFQSYDQYCSLFHFILNSDGPVDLEPPSYYWAWDVIDEFIYQFNSFSSYRMRIARQANNEEEAQILRENPNTWGCYSVLNVLYSLIQRSQILEQLQAMKRNEDPMAVAGDYGSRSLYRMLGYFSIIGLLRVHCLLGDFSLALRTLDDIELNKKAMFARVMAAHFTTYYYVGFSYMMVRRYADAIRMFSHILVYVSRTKNFQKNAQYDSITKKNDQMLALIAICVAFHPTRLDDTIHTALREKFGDQLLKLQRGGPESLPVYEELFRTACPKFISPVPPDFDNPEANVDPIEHHLSVFMDEVKTNMWSPTVKSYLRLYTTMDLKKLAGFLSVKPEELRSWLLVNKQRTKQLRWADHGLLDGELVNVSDLDYAMQGDLIHISEAKVGRKLVDWYLRNLSRTYV.

A PCI domain is found at 252 to 446; it reads DAIRMFSHIL…DLDYAMQGDL (195 aa).

It belongs to the eIF-3 subunit L family.

The protein resides in the cytoplasm. Component of the eukaryotic translation initiation factor 3 (eIF-3) complex, which is involved in protein synthesis of a specialized repertoire of mRNAs and, together with other initiation factors, stimulates binding of mRNA and methionyl-tRNAi to the 40S ribosome. The eIF-3 complex specifically targets and initiates translation of a subset of mRNAs involved in cell proliferation. This is Eukaryotic translation initiation factor 3 subunit L from Pyricularia oryzae (strain Y34) (Rice blast fungus).